The following is a 345-amino-acid chain: G-protein coupled receptor str-33 (345 aa).

Residues 1 to 11 lie on the Extracellular side of the membrane; that stretch reads MTVNLRDLSRT. The chain crosses the membrane as a helical span at residues 12 to 32; the sequence is IAEFAFLTALVCNSLLIYLTA. Residues 33 to 37 are Cytoplasmic-facing; sequence RRTKN. A helical transmembrane segment spans residues 38 to 58; it reads ITGAYKYMIILFALLGLIFSC. Residues 59–92 lie on the Extracellular side of the membrane; it reads TEMLARPFVHNFNASFVYFSLSNDLSEFKSLVQM. N-linked (GlcNAc...) asparagine glycosylation is present at Asn71. Residues 93 to 113 traverse the membrane as a helical segment; that stretch reads LLVLYSGLYSSLISFVAVQFI. At 114–133 the chain is on the cytoplasmic side; the sequence is YRYMVLVNANLLESWFTGWK. The chain crosses the membrane as a helical span at residues 134-154; that stretch reads LVFWVFYVIFFGFAWSASVYF. The Extracellular segment spans residues 155-204; the sequence is CLFPDTYSYNYIRTEFKDVYNIGVDRVAIFILVAYEKHPSSEEYKLRPAS. Residues 205-225 traverse the membrane as a helical segment; the sequence is VIMIAGTISILVIQYSIMLFC. Residues 226–258 are Cytoplasmic-facing; it reads GASMHRQMNEKLKNFSPDNQRLQKQFFKTLLLQ. Residues 259-279 traverse the membrane as a helical segment; it reads ISVPTVLFHMPIFPVLLGPFF. Topologically, residues 280–288 are extracellular; sequence NFEISAESG. A helical transmembrane segment spans residues 289–309; the sequence is IIYSLFSLYPPIDGLIIMTVV. At 310–345 the chain is on the cytoplasmic side; sequence TDYRIALTELFLGSHSGAQVEVIPVEVVSILNFSLL.

This sequence belongs to the nematode receptor-like protein str family. As to expression, detected in ALM and PLM mechanosensory neurons and head neurons.

Its subcellular location is the cell membrane. Its function is as follows. Regulates egg-laying and locomotion. Likely to act upstream of goa-1 to suppress 5-hydroxytryptamine (5-HT) biosynthesis in hermaphrodite-specific neurons (HSNs) through inhibition of tph-1 transcription. In Caenorhabditis elegans, this protein is G-protein coupled receptor str-33.